The primary structure comprises 472 residues: Uronate isomerase (472 aa).

The protein belongs to the metallo-dependent hydrolases superfamily. Uronate isomerase family.

The enzyme catalyses D-glucuronate = D-fructuronate. It carries out the reaction aldehydo-D-galacturonate = keto-D-tagaturonate. The protein operates within carbohydrate metabolism; pentose and glucuronate interconversion. This Xanthomonas oryzae pv. oryzae (strain MAFF 311018) protein is Uronate isomerase.